The chain runs to 466 residues: Asparagine--tRNA ligase (466 aa).

Belongs to the class-II aminoacyl-tRNA synthetase family. Homodimer.

Its subcellular location is the cytoplasm. It catalyses the reaction tRNA(Asn) + L-asparagine + ATP = L-asparaginyl-tRNA(Asn) + AMP + diphosphate + H(+). This chain is Asparagine--tRNA ligase, found in Shewanella baltica (strain OS195).